The primary structure comprises 36 residues: MTDLNLPSIFVPLVGLVFPAIAMASLSLHVQKNKIV.

The helical transmembrane segment at 6–26 threads the bilayer; sequence LPSIFVPLVGLVFPAIAMASL.

This sequence belongs to the PsaI family.

The protein resides in the plastid. It localises to the chloroplast thylakoid membrane. Its function is as follows. May help in the organization of the PsaL subunit. In Drimys granadensis, this protein is Photosystem I reaction center subunit VIII.